Here is a 90-residue protein sequence, read N- to C-terminus: Acyl-CoA-binding protein homolog (90 aa).

The ACB domain occupies 3 to 89 (LQEQFDQAAS…VESLIASLGL (87 aa)). Residues Arg-15, 30 to 34 (YALFK), Lys-53, Lys-57, and Tyr-76 contribute to the an acyl-CoA site.

The protein belongs to the ACBP family.

Its function is as follows. Binds medium- and long-chain acyl-CoA esters with very high affinity and may function as an intracellular carrier of acyl-CoA esters. The polypeptide is Acyl-CoA-binding protein homolog (Manduca sexta (Tobacco hawkmoth)).